A 335-amino-acid chain; its full sequence is Acetyl-coenzyme A carboxylase carboxyl transferase subunit alpha (335 aa).

The region spanning 40-294 (QLETLATRRR…KASIERHLSE (255 aa)) is the CoA carboxyltransferase C-terminal domain.

Belongs to the AccA family. Acetyl-CoA carboxylase is a heterohexamer composed of biotin carboxyl carrier protein (AccB), biotin carboxylase (AccC) and two subunits each of ACCase subunit alpha (AccA) and ACCase subunit beta (AccD).

The protein localises to the cytoplasm. It catalyses the reaction N(6)-carboxybiotinyl-L-lysyl-[protein] + acetyl-CoA = N(6)-biotinyl-L-lysyl-[protein] + malonyl-CoA. It participates in lipid metabolism; malonyl-CoA biosynthesis; malonyl-CoA from acetyl-CoA: step 1/1. Functionally, component of the acetyl coenzyme A carboxylase (ACC) complex. First, biotin carboxylase catalyzes the carboxylation of biotin on its carrier protein (BCCP) and then the CO(2) group is transferred by the carboxyltransferase to acetyl-CoA to form malonyl-CoA. In Prochlorococcus marinus (strain MIT 9515), this protein is Acetyl-coenzyme A carboxylase carboxyl transferase subunit alpha.